The chain runs to 242 residues: Type III pantothenate kinase (242 aa).

6–13 (DAGNTRIK) is a binding site for ATP. Substrate is bound by residues Y90 and 97–100 (GADR). Residue D99 is the Proton acceptor of the active site. T122 contributes to the ATP binding site. T172 is a substrate binding site.

This sequence belongs to the type III pantothenate kinase family. Homodimer. NH4(+) serves as cofactor. Requires K(+) as cofactor.

The protein localises to the cytoplasm. It catalyses the reaction (R)-pantothenate + ATP = (R)-4'-phosphopantothenate + ADP + H(+). It participates in cofactor biosynthesis; coenzyme A biosynthesis; CoA from (R)-pantothenate: step 1/5. In terms of biological role, catalyzes the phosphorylation of pantothenate (Pan), the first step in CoA biosynthesis. The protein is Type III pantothenate kinase of Aromatoleum aromaticum (strain DSM 19018 / LMG 30748 / EbN1) (Azoarcus sp. (strain EbN1)).